The following is a 236-amino-acid chain: Ribonuclease HII (236 aa).

In terms of domain architecture, RNase H type-2 spans 21–214 (RTVAGVDEVG…LDALPRWQHL (194 aa)). A divalent metal cation-binding residues include Asp-27, Glu-28, and Asp-119.

It belongs to the RNase HII family. The cofactor is Mn(2+). Mg(2+) is required as a cofactor.

Its subcellular location is the cytoplasm. The enzyme catalyses Endonucleolytic cleavage to 5'-phosphomonoester.. Endonuclease that specifically degrades the RNA of RNA-DNA hybrids. This is Ribonuclease HII from Streptomyces griseus subsp. griseus (strain JCM 4626 / CBS 651.72 / NBRC 13350 / KCC S-0626 / ISP 5235).